The following is a 215-amino-acid chain: Probable phosphoglycerate mutase GpmB (215 aa).

Substrate-binding positions include R8–N15, Q21–G22, R58, E82–M85, and G151–M152. H9 (tele-phosphohistidine intermediate) is an active-site residue. E82 (proton donor/acceptor) is an active-site residue.

This sequence belongs to the phosphoglycerate mutase family. GpmB subfamily.

It carries out the reaction (2R)-2-phosphoglycerate = (2R)-3-phosphoglycerate. It functions in the pathway carbohydrate degradation; glycolysis; pyruvate from D-glyceraldehyde 3-phosphate: step 3/5. The protein is Probable phosphoglycerate mutase GpmB of Yersinia pseudotuberculosis serotype O:1b (strain IP 31758).